A 487-amino-acid chain; its full sequence is Protein Optix (487 aa).

The homeobox DNA-binding region spans 154–214; sequence WDGEQKTHCF…KNRRQRDRAA (61 aa). 2 disordered regions span residues 182-330 and 443-463; these read NPTK…GAGP and ASVG…GYHH. Residues 255–277 are compositionally biased toward polar residues; it reads GTHSPVPSSLQLQHSPGSTSNGA. The segment covering 278 to 293 has biased composition (basic and acidic residues); the sequence is NDREESLSVDDDKPRD. The span at 294-312 shows a compositional bias: low complexity; that stretch reads LSGSLPLPLSLPLPLASPT. The span at 321 to 330 shows a compositional bias: gly residues; sequence GYGGGAGAGP.

This sequence belongs to the SIX/Sine oculis homeobox family. In terms of tissue distribution, expressed during early development of the head. First expressed in a band around the anterior end of stage 5 blastoderm embryo, at 93% to 85% egg length. By gastrula stage, site of expression shifts to the dorsal-anterior region. At stage 12, expression is found in the clypeolabrum, the stomodaeum, and in ectoderm dorsal to the future supraesophageal ganglion.

It localises to the nucleus. May be involved in head or eye development; development of the clypeolabrum and several head sensory organs. The protein is Protein Optix (Optix) of Drosophila melanogaster (Fruit fly).